The chain runs to 341 residues: Very-long-chain 3-oxoacyl-CoA reductase (341 aa).

A helical transmembrane segment spans residues 22–42 (AIYGFLLAGVAAFAAPIVSTI). 8 residues coordinate NADP(+): L67, D123, D131, N150, Y217, K221, I250, and T252. Catalysis depends on Y217, which acts as the Proton donor. The active-site Lowers pKa of active site Tyr is K221.

The protein belongs to the short-chain dehydrogenases/reductases (SDR) family.

It localises to the endoplasmic reticulum membrane. The enzyme catalyses a very-long-chain (3R)-3-hydroxyacyl-CoA + NADP(+) = a very-long-chain 3-oxoacyl-CoA + NADPH + H(+). The protein operates within lipid metabolism; fatty acid biosynthesis. Functionally, component of the microsomal membrane bound fatty acid elongation system, which produces the 26-carbon very long-chain fatty acids (VLCFA) from palmitate. Catalyzes the reduction of the 3-ketoacyl-CoA intermediate that is formed in each cycle of fatty acid elongation. VLCFAs serve as precursors for ceramide and sphingolipids. This chain is Very-long-chain 3-oxoacyl-CoA reductase, found in Phaeosphaeria nodorum (strain SN15 / ATCC MYA-4574 / FGSC 10173) (Glume blotch fungus).